The following is a 695-amino-acid chain: DUF724 domain-containing protein 3 (695 aa).

The disordered stretch occupies residues 376–464 (ITVTPLKQQD…GTSDTIRVDD (89 aa)). Positions 384 to 402 (QDAETEGKKSPKKTPEPVK) are enriched in basic and acidic residues. Positions 434–459 (NQNSNLNETDETCNVSKAGVNGTSDT) are enriched in polar residues. Positions 509-694 (PFTKNLPFWK…LEFITSVLAP (186 aa)) constitute a DUF724 domain. Residues 614-684 (VEERKCLEKR…TIDQEIANVE (71 aa)) adopt a coiled-coil conformation.

As to quaternary structure, homodimer.

May be involved in the polar growth of plant cells via transportation of RNAs. This Arabidopsis thaliana (Mouse-ear cress) protein is DUF724 domain-containing protein 3.